A 179-amino-acid chain; its full sequence is Large ribosomal subunit protein uL5 (179 aa).

The protein belongs to the universal ribosomal protein uL5 family. As to quaternary structure, part of the 50S ribosomal subunit; part of the 5S rRNA/L5/L18/L25 subcomplex. Contacts the 5S rRNA and the P site tRNA. Forms a bridge to the 30S subunit in the 70S ribosome.

Its function is as follows. This is one of the proteins that bind and probably mediate the attachment of the 5S RNA into the large ribosomal subunit, where it forms part of the central protuberance. In the 70S ribosome it contacts protein S13 of the 30S subunit (bridge B1b), connecting the 2 subunits; this bridge is implicated in subunit movement. Contacts the P site tRNA; the 5S rRNA and some of its associated proteins might help stabilize positioning of ribosome-bound tRNAs. This chain is Large ribosomal subunit protein uL5, found in Pseudoalteromonas translucida (strain TAC 125).